Here is a 513-residue protein sequence, read N- to C-terminus: Noroxomaritidine synthase (513 aa).

A helical membrane pass occupies residues 14–34; sequence HYPEILIAIACFLIFSLLLSA. Cys458 contacts heme.

It belongs to the cytochrome P450 family. Heme is required as a cofactor.

Its subcellular location is the membrane. It carries out the reaction 4'-O-methylnorbelladine + reduced [NADPH--hemoprotein reductase] + O2 = (10bS,4aR)-noroxomaritidine + oxidized [NADPH--hemoprotein reductase] + 2 H2O + H(+). It catalyses the reaction 4'-O-methylnorbelladine + reduced [NADPH--hemoprotein reductase] + O2 = (10bR,4aS)-noroxomaritidine + oxidized [NADPH--hemoprotein reductase] + 2 H2O + H(+). It functions in the pathway alkaloid biosynthesis. Functionally, cytochrome P450 that catalyzes an intramolecular para-para' C-C phenol coupling of 4'-O-methylnorbelladine in alkaloids biosynthesis, including haemanthamine- and crinamine-type alkaloids, promising anticancer agents. Catalyzes the formation of (10bR,4aS)-noroxomaritidine and (10bS,4aR)-noroxomaritidine from 4'-O-methylnorbelladine. Also produces N-demethylnarwedine as a minor product. Involved in the biosynthesis of haemanthamine. Can also use 4'-O-methyl-N-methylnorbelladine, (S)- and (R)-coclaurine as substrates, but not 3'-O-methylnorbelladine, 3',4'-O-dimethylnorbelladine, norbelladine, haemanthamine, (10bS,4aR)- or (10bR,4aS)-noroxomaritidine, isovanillin or tyramine. The protein is Noroxomaritidine synthase of Narcissus aff. pseudonarcissus MK-2014 (Daffodil).